The following is a 932-amino-acid chain: Ribosome biogenesis protein ERB1 (932 aa).

Low complexity predominate over residues 1-18; that stretch reads MVRPSSSSSASASAARSG. The tract at residues 1–229 is disordered; it reads MVRPSSSSSA…RSQAAQAFDL (229 aa). Residues 27–36 show a composition bias toward polar residues; the sequence is PTATNPTTRA. 2 stretches are compositionally biased toward acidic residues: residues 57–119 and 150–172; these read VSDD…EVDS and DNSDFDDDADEGDLAYDSADEDE. Over residues 175–184 the composition is skewed to low complexity; sequence SAFAARSDAS. WD repeat units follow at residues 555 to 594 and 604 to 644; these read PDGGRVRCLSVDPTGNWLVTGGDDGRARLWDVAIGRCTAS and AERS…NYAK. A disordered region spans residues 679 to 698; the sequence is SMPSKPDARSPVAWTRPSEA. 4 WD repeats span residues 762–800, 803–842, 846–885, and 901–932; these read SKGSSIQKLVFHPTKPWIFVATQRYIRIYDLMAQSLIKT, SGFKWISTLDVHPSGDHLMVGSYDKKLAWFDLDLSARPYK, YHARAIRSVHFSTSWNLVADASDDGTLQLFYAKVGADYGE, and KNGLGVLDVKWHPNQPWLFSAGADGNALLWTT.

This sequence belongs to the WD repeat BOP1/ERB1 family. In terms of assembly, component of the NOP7 complex, composed of ERB1, NOP7 and YTM1. The complex is held together by ERB1, which interacts with NOP7 via its N-terminal domain and with YTM1 via a high-affinity interaction between the seven-bladed beta-propeller domains of the 2 proteins. The NOP7 complex associates with the 66S pre-ribosome.

Its subcellular location is the nucleus. The protein resides in the nucleolus. It localises to the nucleoplasm. Component of the NOP7 complex, which is required for maturation of the 25S and 5.8S ribosomal RNAs and formation of the 60S ribosome. The polypeptide is Ribosome biogenesis protein ERB1 (Mycosarcoma maydis (Corn smut fungus)).